We begin with the raw amino-acid sequence, 451 residues long: Cobyrinate a,c-diamide synthase (451 aa).

Residues 246–437 (KIGVAYDEVF…VHTHVAAMPN (192 aa)) enclose the GATase cobBQ-type domain. Cys328 acts as the Nucleophile in catalysis.

This sequence belongs to the CobB/CbiA family. Requires Mg(2+) as cofactor.

It catalyses the reaction cob(II)yrinate + 2 L-glutamine + 2 ATP + 2 H2O = cob(II)yrinate a,c diamide + 2 L-glutamate + 2 ADP + 2 phosphate + 2 H(+). The catalysed reaction is Ni-sirohydrochlorin + 2 L-glutamine + 2 ATP + 2 H2O = Ni-sirohydrochlorin a,c-diamide + 2 L-glutamate + 2 ADP + 2 phosphate + 2 H(+). Its pathway is cofactor biosynthesis; adenosylcobalamin biosynthesis; cob(II)yrinate a,c-diamide from sirohydrochlorin (anaerobic route): step 10/10. Functionally, catalyzes the ATP-dependent amidation of the two carboxylate groups at positions a and c of cobyrinate, using either L-glutamine or ammonia as the nitrogen source. Involved in the biosynthesis of the unique nickel-containing tetrapyrrole coenzyme F430, the prosthetic group of methyl-coenzyme M reductase (MCR), which plays a key role in methanogenesis and anaerobic methane oxidation. Catalyzes the ATP-dependent amidation of the two carboxylate groups at positions a and c of Ni-sirohydrochlorin, using L-glutamine or ammonia as the nitrogen source. The polypeptide is Cobyrinate a,c-diamide synthase (Methanobrevibacter smithii (strain ATCC 35061 / DSM 861 / OCM 144 / PS)).